The sequence spans 255 residues: Imidazole glycerol phosphate synthase subunit HisF (255 aa).

Active-site residues include D12 and D131.

Belongs to the HisA/HisF family. Heterodimer of HisH and HisF.

The protein localises to the cytoplasm. It carries out the reaction 5-[(5-phospho-1-deoxy-D-ribulos-1-ylimino)methylamino]-1-(5-phospho-beta-D-ribosyl)imidazole-4-carboxamide + L-glutamine = D-erythro-1-(imidazol-4-yl)glycerol 3-phosphate + 5-amino-1-(5-phospho-beta-D-ribosyl)imidazole-4-carboxamide + L-glutamate + H(+). It participates in amino-acid biosynthesis; L-histidine biosynthesis; L-histidine from 5-phospho-alpha-D-ribose 1-diphosphate: step 5/9. Functionally, IGPS catalyzes the conversion of PRFAR and glutamine to IGP, AICAR and glutamate. The HisF subunit catalyzes the cyclization activity that produces IGP and AICAR from PRFAR using the ammonia provided by the HisH subunit. The sequence is that of Imidazole glycerol phosphate synthase subunit HisF from Ignicoccus hospitalis (strain KIN4/I / DSM 18386 / JCM 14125).